Here is a 208-residue protein sequence, read N- to C-terminus: N-(5'-phosphoribosyl)anthranilate isomerase (208 aa).

The protein belongs to the TrpF family.

It catalyses the reaction N-(5-phospho-beta-D-ribosyl)anthranilate = 1-(2-carboxyphenylamino)-1-deoxy-D-ribulose 5-phosphate. Its pathway is amino-acid biosynthesis; L-tryptophan biosynthesis; L-tryptophan from chorismate: step 3/5. The chain is N-(5'-phosphoribosyl)anthranilate isomerase from Methanothrix thermoacetophila (strain DSM 6194 / JCM 14653 / NBRC 101360 / PT) (Methanosaeta thermophila).